The chain runs to 362 residues: tRNA-specific 2-thiouridylase MnmA 3 (362 aa).

ATP is bound by residues 11-18 (GMSGGIDS) and M37. The active-site Nucleophile is C91. Cysteines 91 and 188 form a disulfide. G115 contributes to the ATP binding site. The interaction with tRNA stretch occupies residues 137-139 (KDQ). C188 (cysteine persulfide intermediate) is an active-site residue. The segment at 296–297 (RY) is interaction with tRNA.

Belongs to the MnmA/TRMU family.

It localises to the cytoplasm. The catalysed reaction is S-sulfanyl-L-cysteinyl-[protein] + uridine(34) in tRNA + AH2 + ATP = 2-thiouridine(34) in tRNA + L-cysteinyl-[protein] + A + AMP + diphosphate + H(+). Its function is as follows. Catalyzes the 2-thiolation of uridine at the wobble position (U34) of tRNA, leading to the formation of s(2)U34. This Bacteroides fragilis (strain ATCC 25285 / DSM 2151 / CCUG 4856 / JCM 11019 / LMG 10263 / NCTC 9343 / Onslow / VPI 2553 / EN-2) protein is tRNA-specific 2-thiouridylase MnmA 3.